A 275-amino-acid polypeptide reads, in one-letter code: Lectin (275 aa).

The first 30 residues, 1-30 (MASLQTQMISFYAIFLSILLTTILFFKVNS), serve as a signal peptide directing secretion. Mn(2+) is bound by residues E149 and D151. 4 residues coordinate Ca(2+): D151, F153, N155, and D159. Mn(2+) is bound by residues D159 and H166. The N-linked (GlcNAc...) asparagine glycan is linked to N217.

This sequence belongs to the leguminous lectin family. Tetramer of two alpha and two beta chains.

In terms of biological role, D-mannose specific lectin. This is Lectin (LECA) from Pisum sativum (Garden pea).